The sequence spans 143 residues: Ribonuclease P protein component 2 (143 aa).

It belongs to the eukaryotic/archaeal RNase P protein component 2 family. In terms of assembly, consists of a catalytic RNA component and at least 4-5 protein subunits.

It is found in the cytoplasm. It catalyses the reaction Endonucleolytic cleavage of RNA, removing 5'-extranucleotides from tRNA precursor.. Part of ribonuclease P, a protein complex that generates mature tRNA molecules by cleaving their 5'-ends. In Saccharolobus solfataricus (strain ATCC 35092 / DSM 1617 / JCM 11322 / P2) (Sulfolobus solfataricus), this protein is Ribonuclease P protein component 2.